The sequence spans 1689 residues: Cullin-7 (1689 aa).

In terms of domain architecture, CPH spans 349–422; sequence RASFASFNTY…HWHMLEILGF (74 aa). A DOC domain is found at 793–972; sequence PIQIPFFDVF…HTRLFYMVRA (180 aa). A compositionally biased stretch (basic and acidic residues) spans 1321-1337; the sequence is VAHEDSGREDKSKKEEA. Residues 1321–1371 form a disordered region; that stretch reads VAHEDSGREDKSKKEEAIGEAAAVAMAEEEDQGKKEEGEEEGEGEDEEEER. Over residues 1358–1370 the composition is skewed to acidic residues; it reads GEEEGEGEDEEEE. K1567 is covalently cross-linked (Glycyl lysine isopeptide (Lys-Gly) (interchain with G-Cter in NEDD8)).

This sequence belongs to the cullin family. As to quaternary structure, component of the 3M complex, composed of core components CUL7, CCDC8 and OBSL1. Component of the Cul7-RING(FBXW8) complex consisting of CUL7, RBX1, SKP1 and FBXW8. Within the Cul7-RING(FBXW8) complex interacts with FBXW8 and RBX1, but not with SKP1. Interacts with CUL1 (via the C-terminal domain); the interaction seems to be mediated by FBXW8; it is likely specific to FBXW8, but not other F-box proteins. Interacts (via the CPH domain) with p53/TP53; the interaction preferentially involves tetrameric and dimeric p53/TP53; this interaction recruits p53/TP53 for ubiquitination by neddylated CUL1-RBX1. The CUL7-CUL9 heterodimer seems to interact specifically with p53/TP53. Interacts with FBXW8; interaction is mutually exclusive of binding to CUL9 or p53/TP53. Interacts with CUL9; leading to inhibited CUL9 activity. Interacts with OBSL1. Interacts (as part of the 3M complex) with HDAC4 and HDAC5; it is negatively regulated by ANKRA2.

The protein resides in the cytoplasm. It localises to the cytoskeleton. Its subcellular location is the microtubule organizing center. The protein localises to the centrosome. It is found in the perinuclear region. The protein resides in the golgi apparatus. Its pathway is protein modification; protein ubiquitination. In terms of biological role, core component of the 3M and Cul7-RING(FBXW8) complexes, which mediate the ubiquitination and subsequent proteasomal degradation of target proteins. Core component of the 3M complex, a complex required to regulate microtubule dynamics and genome integrity. It is unclear how the 3M complex regulates microtubules, it could act by controlling the level of a microtubule stabilizer. The Cul7-RING(FBXW8) complex alone lacks ubiquitination activity and does not promote polyubiquitination and proteasomal degradation of p53/TP53. However it mediates recruitment of p53/TP53 for ubiquitination by neddylated CUL1-RBX1. Interaction with CUL9 is required to inhibit CUL9 activity and ubiquitination of BIRC5. The Cul7-RING(FBXW8) complex also mediates ubiquitination and consequent degradation of target proteins such as GORASP1, IRS1 and MAP4K1/HPK1. Ubiquitination of GORASP1 regulates Golgi morphogenesis and dendrite patterning in brain. Mediates ubiquitination and degradation of IRS1 in a mTOR-dependent manner: the Cul7-RING(FBXW8) complex recognizes and binds IRS1 previously phosphorylated by S6 kinase (RPS6KB1 or RPS6KB2). The Cul7-RING(FBXW8) complex also mediates ubiquitination of MAP4K1/HPK1: recognizes and binds autophosphorylated MAP4K1/HPK1, leading to its degradation, thereby affecting cell proliferation and differentiation. Acts as a regulator in trophoblast cell epithelial-mesenchymal transition and placental development. While the Cul7-RING(FBXW8) and the 3M complexes are associated and involved in common processes, CUL7 and the Cul7-RING(FBXW8) complex may have additional functions. Probably plays a role in the degradation of proteins involved in endothelial proliferation and/or differentiation. This chain is Cullin-7 (Cul7), found in Mus musculus (Mouse).